The following is a 1306-amino-acid chain: Angiotensin-converting enzyme (1306 aa).

The first 29 residues, 1-29 (MGAASGRRGPGLLLPLPLLLLLPPQPALA), serve as a signal peptide directing secretion. Topologically, residues 30–1256 (LDPGLQPGNF…GLDLDAQQAR (1227 aa)) are extracellular. Residues Asn38, Asn54, Asn74, Glu103, Asn111, Ile121, Tyr140, Asn146, and Asn160 are each glycosylated (N-linked (GlcNAc...) asparagine). Peptidase M2 domains are found at residues 40-624 (SADE…LGWP) and 643-1222 (VTDE…LGWP). Cys157 and Cys165 are oxidised to a cystine. Tyr231 is a binding site for chloride. 2 N-linked (GlcNAc...) asparagine glycosylation sites follow: Asn318 and Asn368. An intrachain disulfide couples Cys359 to Cys377. Residue His390 coordinates Zn(2+). Glu391 acts as the Proton acceptor 1 in catalysis. Zn(2+)-binding residues include His394, Pro414, Glu418, and Arg442. Residues Asn445 and Asn509 are each glycosylated (N-linked (GlcNAc...) asparagine). Catalysis depends on His520, which acts as the Proton donor 1. Arg529 serves as a coordination point for chloride. Cys545 and Cys557 are disulfide-bonded. Asn617 and Asn677 each carry an N-linked (GlcNAc...) asparagine glycan. Residues Asn695 and Asn714 are each glycosylated (N-linked (GlcNAc...) (complex) asparagine). An intrachain disulfide couples Cys757 to Cys763. N-linked (GlcNAc...) asparagine; partial glycosylation occurs at Asn760. Residues Arg791 and Tyr829 each coordinate chloride. The N-linked (GlcNAc...) asparagine; partial glycan is linked to Asn942. Residues Cys957 and Cys975 are joined by a disulfide bond. His988 contributes to the Zn(2+) binding site. Residue Glu989 is the Proton acceptor 2 of the active site. The Zn(2+) site is built by His992 and Glu1016. Chloride contacts are provided by Trp1090 and Arg1094. His1118 serves as the catalytic Proton donor 2. A chloride-binding site is contributed by Arg1127. Cys1143 and Cys1155 are joined by a disulfide. The N-linked (GlcNAc...) asparagine; partial glycan is linked to Asn1191. The segment at 1215–1256 (HGEKLGWPQYNWTPNSARSEGPLPDSGRVSFLGLDLDAQQAR) is juxtamembrane stalk. Residues 1257-1277 (VGQWLLLFLGIALLVATLGLS) form a helical membrane-spanning segment. Topologically, residues 1278 to 1306 (QRLFSIRHRSLHRHSHGPQFGSEVELRHS) are cytoplasmic. Ser1299 is subject to Phosphoserine.

The protein belongs to the peptidase M2 family. In terms of assembly, monomer and homodimer; homodimerizes following binding to an inhibitor. Interacts with calmodulin (CALM1, CALM2 or CALM3); interaction takes place in the cytoplasmic region and regulates phosphorylation and proteolytic cleavage. It depends on Zn(2+) as a cofactor. Chloride is required as a cofactor. In terms of processing, produced following proteolytic cleavage by secretase enzymes that cleave the transmembrane form in the juxtamembrane stalk region upstream of the transmembrane region. Cleavage can take place at different sites of the juxtamembrane stalk region. Post-translationally, phosphorylated by CK2 on Ser-1299; which allows membrane retention. Phosphorylated on tyrosine residues on its extracellular part, promoting cleavage by secretase enzymes and formation of the soluble form (Angiotensin-converting enzyme, soluble form). Ubiquitously expressed, with highest levels in lung, kidney, heart, gastrointestinal system and prostate. As to expression, specifically expressed in spermatocytes and adult testis.

Its subcellular location is the cell membrane. It is found in the cytoplasm. The protein localises to the secreted. The enzyme catalyses Release of a C-terminal dipeptide, oligopeptide-|-Xaa-Yaa, when Xaa is not Pro, and Yaa is neither Asp nor Glu. Thus, conversion of angiotensin I to angiotensin II, with increase in vasoconstrictor activity, but no action on angiotensin II.. The catalysed reaction is angiotensin I + H2O = L-histidyl-L-leucine + angiotensin II. It carries out the reaction bradykinin + H2O = L-Phe-L-Arg + bradykinin(1-7). It catalyses the reaction substance P + H2O = substance P(1-9) + L-Leu-L-Met-NH2. The enzyme catalyses substance P + H2O = substance P(1-8) + Gly-L-Leu-L-Met-NH2. The catalysed reaction is substance P + H2O = L-Phe-L-Phe-Gly-L-Leu-L-Met-NH2 + substance P(1-6). It carries out the reaction neurotensin + H2O = neurotensin(1-11) + L-isoleucyl-L-leucine. It catalyses the reaction goralatide + H2O = N-acetyl-L-seryl-L-aspartate + L-lysyl-L-proline. The enzyme catalyses Met-enkephalin + H2O = L-phenylalanyl-L-methionine + L-tyrosylglycylglycine. The catalysed reaction is Leu-enkephalin + H2O = L-tyrosylglycylglycine + L-phenylalanyl-L-leucine. It carries out the reaction Met-enkephalin-Arg-Phe + H2O = L-arginyl-L-phenylalanine + Met-enkephalin. The dipeptidyl carboxypeptidase activity is strongly activated by chloride. The dipeptidyl carboxypeptidase activity is specifically inhibited by lisinopril, captopril and enalaprilat. With respect to regulation, strongly inhibited by lisinopril and captopril. In terms of biological role, dipeptidyl carboxypeptidase that removes dipeptides from the C-terminus of a variety of circulating hormones, such as angiotensin I, bradykinin or enkephalins, thereby playing a key role in the regulation of blood pressure, electrolyte homeostasis or synaptic plasticity. Composed of two similar catalytic domains, each possessing a functional active site, with different selectivity for substrates. Plays a major role in the angiotensin-renin system that regulates blood pressure and sodium retention by the kidney by converting angiotensin I to angiotensin II, resulting in an increase of the vasoconstrictor activity of angiotensin. Also able to inactivate bradykinin, a potent vasodilator, and therefore enhance the blood pressure response. Acts as a regulator of synaptic transmission by mediating cleavage of neuropeptide hormones, such as substance P, neurotensin or enkephalins. Catalyzes degradation of different enkephalin neuropeptides (Met-enkephalin, Leu-enkephalin, Met-enkephalin-Arg-Phe and possibly Met-enkephalin-Arg-Gly-Leu). Acts as a regulator of synaptic plasticity in the nucleus accumbens of the brain by mediating cleavage of Met-enkephalin-Arg-Phe, a strong ligand of Mu-type opioid receptor OPRM1, into Met-enkephalin. Met-enkephalin-Arg-Phe cleavage by ACE decreases activation of OPRM1, leading to long-term synaptic potentiation of glutamate release. Also acts as a regulator of hematopoietic stem cell differentiation by mediating degradation of hemoregulatory peptide N-acetyl-SDKP (AcSDKP). Acts as a regulator of cannabinoid signaling pathway by mediating degradation of hemopressin, an antagonist peptide of the cannabinoid receptor CNR1. Involved in amyloid-beta metabolism by catalyzing degradation of Amyloid-beta protein 40 and Amyloid-beta protein 42 peptides, thereby preventing plaque formation. Catalyzes cleavage of cholecystokinin (maturation of Cholecystokinin-8 and Cholecystokinin-5) and Gonadoliberin-1 (both maturation and degradation) hormones. Degradation of hemoregulatory peptide N-acetyl-SDKP (AcSDKP) and amyloid-beta proteins is mediated by the N-terminal catalytic domain, while angiotensin I and cholecystokinin cleavage is mediated by the C-terminal catalytic region. Its function is as follows. Soluble form that is released in blood plasma and other body fluids following proteolytic cleavage in the juxtamembrane stalk region. Functionally, isoform produced by alternative promoter usage that is specifically expressed in spermatocytes and adult testis, and which is required for male fertility. In contrast to somatic isoforms, only contains one catalytic domain. Acts as a dipeptidyl carboxypeptidase that removes dipeptides from the C-terminus of substrates. The identity of substrates that are needed for male fertility is unknown. May also have a glycosidase activity which releases GPI-anchored proteins from the membrane by cleaving the mannose linkage in the GPI moiety. The GPIase activity was reported to be essential for the egg-binding ability of the sperm. This activity is however unclear and has been challenged by other groups, suggesting that it may be indirect. The sequence is that of Angiotensin-converting enzyme from Homo sapiens (Human).